A 371-amino-acid chain; its full sequence is Protein lifeguard 1 (371 aa).

Residues 1–145 (MSHEKSFLVS…EGPPSYYDNQ (145 aa)) form a disordered region. The segment covering 14 to 49 (YPPPNPGYPGGPQPPMPPYAQPPYPGAPYPQPPFQP) has biased composition (pro residues). Residues 84–98 (YPQEGYPQGPYPQGG) are compositionally biased toward low complexity. Residues 102 to 114 (GPYPQSPFPPNPY) are compositionally biased toward pro residues. 7 consecutive transmembrane segments (helical) span residues 165–185 (VFLV…VFTF), 197–217 (VWTY…LSCC), 228–248 (LVAL…IASF), 253–273 (AVIM…IFSM), 283–303 (MGVL…CIFI), 307–327 (ILEI…LAVD), and 346–366 (FAAL…LTII).

It belongs to the BI1 family. LFG subfamily.

Its subcellular location is the membrane. Its function is as follows. Potential apoptotic regulator. The sequence is that of Protein lifeguard 1 (GRINA) from Homo sapiens (Human).